Reading from the N-terminus, the 277-residue chain is UPF0276 protein PP_2398 (277 aa).

The protein belongs to the UPF0276 family.

In Pseudomonas putida (strain ATCC 47054 / DSM 6125 / CFBP 8728 / NCIMB 11950 / KT2440), this protein is UPF0276 protein PP_2398.